We begin with the raw amino-acid sequence, 834 residues long: DNA-directed RNA polymerase subunit beta' (834 aa).

A compositionally biased stretch (polar residues) spans 1–22; it reads MTYSNKPTGSSLRSSRNSTLEP. The tract at residues 1 to 45 is disordered; that stretch reads MTYSNKPTGSSLRSSRNSTLEPQSLVHREESKRQEGPKGQNLRIG. Residues 26–36 show a composition bias toward basic and acidic residues; that stretch reads VHREESKRQEG. Zn(2+) contacts are provided by Cys-101, Cys-103, Cys-118, and Cys-121. Mg(2+) contacts are provided by Asp-606, Asp-608, and Asp-610.

This sequence belongs to the RNA polymerase beta' chain family. RpoC1 subfamily. In plastids the minimal PEP RNA polymerase catalytic core is composed of four subunits: alpha, beta, beta', and beta''. When a (nuclear-encoded) sigma factor is associated with the core the holoenzyme is formed, which can initiate transcription. Mg(2+) is required as a cofactor. Requires Zn(2+) as cofactor.

It localises to the plastid. The protein localises to the chloroplast. It carries out the reaction RNA(n) + a ribonucleoside 5'-triphosphate = RNA(n+1) + diphosphate. Its function is as follows. DNA-dependent RNA polymerase catalyzes the transcription of DNA into RNA using the four ribonucleoside triphosphates as substrates. The sequence is that of DNA-directed RNA polymerase subunit beta' from Staurastrum punctulatum (Green alga).